Here is a 199-residue protein sequence, read N- to C-terminus: MMIASFAIFLSHIIFITYATSNQRYFKPNMHNNMTITIRRTITKTATAIAVLHSDNGNINGTIHFQQDKNSTTISGEIKGLTPGLHGFHVHQYGDTTNGCISAGPHFNPYNKTHGDPTDEMRHVGDLGNIVAGADGTAHIDISDKHVQLLGPNSIIGRSLVVHADQDDLGKGVGDKKDESLKTGNAGGRVACGIVAISA.

The first 20 residues, 1 to 20 (MMIASFAIFLSHIIFITYAT), serve as a signal peptide directing secretion. Residues asparagine 33, asparagine 60, and asparagine 70 are each glycosylated (N-linked (GlcNAc...) asparagine). Cu cation-binding residues include histidine 89, histidine 91, and histidine 106. Cysteine 100 and cysteine 192 are disulfide-bonded. Histidine 106 serves as a coordination point for Zn(2+). Asparagine 111 is a glycosylation site (N-linked (GlcNAc...) asparagine). The Zn(2+) site is built by histidine 114, histidine 123, and aspartate 126. Histidine 163 contacts Cu cation.

This sequence belongs to the Cu-Zn superoxide dismutase family. As to quaternary structure, homodimer. Cu cation is required as a cofactor. Requires Zn(2+) as cofactor.

Its subcellular location is the secreted. It is found in the extracellular space. The catalysed reaction is 2 superoxide + 2 H(+) = H2O2 + O2. Its function is as follows. Protect the extracellular space from toxic effect of reactive oxygen intermediates by converting superoxide radicals into hydrogen peroxide and oxygen. May act in the parasite defense by neutralizing superoxide generated by activated leukocytes, thus acting as both an antioxidant and an anti-inflammatory factor. In Brugia pahangi (Filarial nematode worm), this protein is Extracellular superoxide dismutase [Cu-Zn].